The sequence spans 433 residues: MTVKIGLLGLGTVGSGTVEILQDPQGRSPLLKAIEVKAVGVRSLDKPRQVNLPPEVLTTDLEAIVTDPDIAIVVELMGGLEPARSLILQAIAHKKHIVTANKAVIARYGPEIYEAANQHGVYVLLEAAVGGGIPIIKPLKQSLGGNRIQSIVGILNGTTNYILSRMTSEGADFDEVLTAAQQLGYAEADPSADVDGLDAADKIAILASLGFGGRVKREDVACEGIRSVSAVDIAYADRLGFVIKLLAIADGNAGEDSEALQLRVHPTLIAKDHPLASVNGVYNGVLVTGDPLGQVMFYGRGAGAGPTASAVVSDVINIVGIITSSDENPALDPLLSCTHQHYCQVSPIEDLVTRFYCRFLCADVPGVIGHLGMGFGNHGVSLESLVQIGFTDGCAEIVVVTHDVREGDYRAALEEISQLEAVKEIPSVIRVLS.

Residues Thr-12, Val-13, and Lys-102 each contribute to the NADPH site. Residue Val-13 participates in NAD(+) binding. Residues Val-13 and Lys-102 each contribute to the NADP(+) site. Na(+) is bound by residues Glu-126, Val-129, Gly-131, and Ile-133. Residues Gly-184 and Glu-187 each coordinate NADP(+). Glu-187 and Asp-198 together coordinate L-homoserine. Lys-202 acts as the Proton donor in catalysis. Gly-303 is a binding site for NADPH. Residue Gly-303 participates in NAD(+) binding. Gly-303 contributes to the NADP(+) binding site. The region spanning 356–433 (YCRFLCADVP…EIPSVIRVLS (78 aa)) is the ACT domain.

The protein belongs to the homoserine dehydrogenase family. The cofactor is a metal cation.

It catalyses the reaction L-homoserine + NADP(+) = L-aspartate 4-semialdehyde + NADPH + H(+). The catalysed reaction is L-homoserine + NAD(+) = L-aspartate 4-semialdehyde + NADH + H(+). Its pathway is amino-acid biosynthesis; L-methionine biosynthesis via de novo pathway; L-homoserine from L-aspartate: step 3/3. The protein operates within amino-acid biosynthesis; L-threonine biosynthesis; L-threonine from L-aspartate: step 3/5. In terms of biological role, catalyzes the conversion of L-aspartate-beta-semialdehyde (L-Asa) to L-homoserine (L-Hse), the third step in the biosynthesis of threonine and methionine from aspartate. The protein is Homoserine dehydrogenase (hom) of Synechocystis sp. (strain ATCC 27184 / PCC 6803 / Kazusa).